The following is a 531-amino-acid chain: UDP-glucuronosyltransferase 1A7 (531 aa).

An N-terminal signal peptide occupies residues 1–25; sequence MAPADVPASLPLGLCLLLASGFGHA. 3 N-linked (GlcNAc...) asparagine glycosylation sites follow: N71, N293, and N431. Residues 487–503 form a helical membrane-spanning segment; sequence LDVIGFLLAIVLTVVFI.

It belongs to the UDP-glycosyltransferase family. In terms of assembly, homodimer. Homooligomer. Interacts with UGT1A1, UGT1A3, UGT1A4, UGT1A6, UGT1A8, UGT1A9 and UGT1A10 to form heterodimers.

It is found in the endoplasmic reticulum membrane. It carries out the reaction glucuronate acceptor + UDP-alpha-D-glucuronate = acceptor beta-D-glucuronoside + UDP + H(+). The enzyme catalyses 17alpha-estradiol + UDP-alpha-D-glucuronate = 17alpha-estradiol 3-O-(beta-D-glucuronate) + UDP + H(+). The catalysed reaction is prunetin + UDP-alpha-D-glucuronate = prunetin-5-O-beta-D-glucuronide + UDP. It catalyses the reaction 5-epi-5-F2t-IsoP + UDP-alpha-D-glucuronate = 5-epi-5-F2t-IsoP-glucuronide + UDP + H(+). It carries out the reaction (E)-ferulate + UDP-alpha-D-glucuronate = (E)-ferulic acid beta-D-glucuronate ester + UDP. The enzyme catalyses candesartan + UDP-alpha-D-glucuronate = candesartan O-beta-D-glucuronoside + UDP. The catalysed reaction is SN-38 + UDP-alpha-D-glucuronate = SN-38 O-beta-D-glucuronide + UDP + H(+). It catalyses the reaction mycophenolate + UDP-alpha-D-glucuronate = mycophenolate 7-O-beta-D-glucuronide + UDP + H(+). Its function is as follows. UDP-glucuronosyltransferase (UGT) that catalyzes phase II biotransformation reactions in which lipophilic substrates are conjugated with glucuronic acid to increase the metabolite's water solubility, thereby facilitating excretion into either the urine or bile. Essential for the elimination and detoxification of drugs, xenobiotics and endogenous compounds. Catalyzes the glucuronidation of endogenous estrogen hormone epiestradiol. Involved in the glucuronidation of F2-isoprostane (5-epi-5-F2t-IsoP). Involved in the glucuronidation of the phytochemical ferulic acid at the carboxylic acid group. Also catalyzes the glucuronidation of the isoflavones genistein, daidzein, glycitein, formononetin, biochanin A and prunetin, which are phytoestrogens with anticancer and cardiovascular properties. Involved in the glucuronidation of the AGTR1 angiotensin receptor antagonist caderastan, a drug which can inhibit the effect of angiotensin II. Involved in the biotransformation of 7-ethyl-10-hydroxycamptothecin (SN-38), the pharmacologically active metabolite of the anticancer drug irinotecan. Also metabolizes mycophenolate, an immunosuppressive agent. This is UDP-glucuronosyltransferase 1A7 from Rattus norvegicus (Rat).